We begin with the raw amino-acid sequence, 372 residues long: Queuine tRNA-ribosyltransferase (372 aa).

Aspartate 89 functions as the Proton acceptor in the catalytic mechanism. Substrate is bound by residues 89-93, aspartate 161, and glycine 232; that span reads DSGGF. The interval 262-268 is RNA binding; it reads GIGDLPS. Catalysis depends on aspartate 281, which acts as the Nucleophile. The interval 286 to 290 is RNA binding; important for wobble base 34 recognition; the sequence is TKAAR. Positions 319, 321, 324, and 351 each coordinate Zn(2+).

The protein belongs to the queuine tRNA-ribosyltransferase family. As to quaternary structure, homodimer. Within each dimer, one monomer is responsible for RNA recognition and catalysis, while the other monomer binds to the replacement base PreQ1. Zn(2+) serves as cofactor.

It carries out the reaction 7-aminomethyl-7-carbaguanine + guanosine(34) in tRNA = 7-aminomethyl-7-carbaguanosine(34) in tRNA + guanine. Its pathway is tRNA modification; tRNA-queuosine biosynthesis. Catalyzes the base-exchange of a guanine (G) residue with the queuine precursor 7-aminomethyl-7-deazaguanine (PreQ1) at position 34 (anticodon wobble position) in tRNAs with GU(N) anticodons (tRNA-Asp, -Asn, -His and -Tyr). Catalysis occurs through a double-displacement mechanism. The nucleophile active site attacks the C1' of nucleotide 34 to detach the guanine base from the RNA, forming a covalent enzyme-RNA intermediate. The proton acceptor active site deprotonates the incoming PreQ1, allowing a nucleophilic attack on the C1' of the ribose to form the product. After dissociation, two additional enzymatic reactions on the tRNA convert PreQ1 to queuine (Q), resulting in the hypermodified nucleoside queuosine (7-(((4,5-cis-dihydroxy-2-cyclopenten-1-yl)amino)methyl)-7-deazaguanosine). The sequence is that of Queuine tRNA-ribosyltransferase from Chlamydia muridarum (strain MoPn / Nigg).